The primary structure comprises 377 residues: Dehydrogenase/reductase SDR family member 13 (377 aa).

An N-terminal signal peptide occupies residues 1-25 (MEALLLGVGLLLGAYVLVYYNLVKA). 2 residues coordinate NAD(+): S46 and I48. Substrate is bound at residue S170. NAD(+) contacts are provided by Y197, K201, and S232. Y197 functions as the Proton acceptor in the catalytic mechanism. The disordered stretch occupies residues 310-363 (LAGLGPGEDAESDEDSQPEDPGTPSSPSSPHPEEPTVSELYPSPQSSTDRSTVT). The segment covering 317 to 327 (EDAESDEDSQP) has biased composition (acidic residues). The span at 328-337 (EDPGTPSSPS) shows a compositional bias: low complexity. Residues 352-363 (SPQSSTDRSTVT) show a composition bias toward polar residues.

The protein belongs to the short-chain dehydrogenases/reductases (SDR) family.

It localises to the secreted. Putative oxidoreductase. This is Dehydrogenase/reductase SDR family member 13 (DHRS13) from Bos taurus (Bovine).